Reading from the N-terminus, the 90-residue chain is DNA-binding protein HU-beta (90 aa).

This sequence belongs to the bacterial histone-like protein family. As to quaternary structure, heterodimer of an alpha and a beta chain.

Its function is as follows. Histone-like DNA-binding protein which is capable of wrapping DNA to stabilize it, and thus to prevent its denaturation under extreme environmental conditions. This Salmonella typhi protein is DNA-binding protein HU-beta (hupB).